Consider the following 289-residue polypeptide: 33 kDa chaperonin (289 aa).

Intrachain disulfides connect C229/C231 and C262/C265.

Belongs to the HSP33 family. In terms of processing, under oxidizing conditions two disulfide bonds are formed involving the reactive cysteines. Under reducing conditions zinc is bound to the reactive cysteines and the protein is inactive.

It localises to the cytoplasm. Its function is as follows. Redox regulated molecular chaperone. Protects both thermally unfolding and oxidatively damaged proteins from irreversible aggregation. Plays an important role in the bacterial defense system toward oxidative stress. The chain is 33 kDa chaperonin from Pectobacterium atrosepticum (strain SCRI 1043 / ATCC BAA-672) (Erwinia carotovora subsp. atroseptica).